The primary structure comprises 326 residues: Interleukin-1-binding protein (326 aa).

Residues 1–18 (MSILPVIFLSIFFYSSFV) form the signal peptide. Ig-like domains are found at residues 24-115 (PECI…LNLT), 122-212 (SNID…RIVK), and 221-322 (PSTM…KTVT). Cysteines 48 and 99 form a disulfide. Residues N80, N103, and N113 are each glycosylated (N-linked (GlcNAc...) asparagine; by host). A disulfide bond links C143 and C194. N206 and N237 each carry an N-linked (GlcNAc...) asparagine; by host glycan. Residues C242 and C309 are joined by a disulfide bond.

This sequence belongs to the interleukin-1 receptor family. In terms of assembly, interacts with mouse Il1b.

Its subcellular location is the secreted. In terms of biological role, may reduce the host inflammatory response by interacting with inteleukin-1 beta (Il1b) and thus decreasing the association between IL1B and its cellular receptor. This chain is Interleukin-1-binding protein (OPG201), found in Vaccinia virus (strain Ankara) (VACV).